The following is a 229-amino-acid chain: Demethylmenaquinone methyltransferase (229 aa).

S-adenosyl-L-methionine contacts are provided by residues Thr57, Asp77, and 101–102; that span reads DV.

This sequence belongs to the class I-like SAM-binding methyltransferase superfamily. MenG/UbiE family.

The catalysed reaction is a 2-demethylmenaquinol + S-adenosyl-L-methionine = a menaquinol + S-adenosyl-L-homocysteine + H(+). Its pathway is quinol/quinone metabolism; menaquinone biosynthesis; menaquinol from 1,4-dihydroxy-2-naphthoate: step 2/2. Functionally, methyltransferase required for the conversion of demethylmenaquinol (DMKH2) to menaquinol (MKH2). The polypeptide is Demethylmenaquinone methyltransferase (Chlamydia muridarum (strain MoPn / Nigg)).